A 210-amino-acid chain; its full sequence is Probable GTP-binding protein EngB (210 aa).

An EngB-type G domain is found at 22–198 (FLPEYAFIGR…LTYIDEVNQE (177 aa)). GTP contacts are provided by residues 30 to 37 (GRSNVGKS), 57 to 61 (GKTQL), 75 to 78 (DLPG), 142 to 145 (TKAD), and 177 to 179 (TSS). Mg(2+) is bound by residues Ser37 and Thr59.

This sequence belongs to the TRAFAC class TrmE-Era-EngA-EngB-Septin-like GTPase superfamily. EngB GTPase family. It depends on Mg(2+) as a cofactor.

Functionally, necessary for normal cell division and for the maintenance of normal septation. This chain is Probable GTP-binding protein EngB, found in Flavobacterium johnsoniae (strain ATCC 17061 / DSM 2064 / JCM 8514 / BCRC 14874 / CCUG 350202 / NBRC 14942 / NCIMB 11054 / UW101) (Cytophaga johnsonae).